The following is a 339-amino-acid chain: Glycerol-3-phosphate dehydrogenase [NAD(P)+] (339 aa).

NADPH is bound by residues Ser15, Tyr16, His36, and Lys110. Sn-glycerol 3-phosphate-binding residues include Lys110, Gly139, and Thr141. Ala143 provides a ligand contact to NADPH. Sn-glycerol 3-phosphate is bound by residues Lys195, Asp248, Ser258, Arg259, and Asn260. Catalysis depends on Lys195, which acts as the Proton acceptor. Residue Arg259 coordinates NADPH. Val283 and Glu285 together coordinate NADPH.

The protein belongs to the NAD-dependent glycerol-3-phosphate dehydrogenase family.

The protein resides in the cytoplasm. It carries out the reaction sn-glycerol 3-phosphate + NAD(+) = dihydroxyacetone phosphate + NADH + H(+). It catalyses the reaction sn-glycerol 3-phosphate + NADP(+) = dihydroxyacetone phosphate + NADPH + H(+). It functions in the pathway membrane lipid metabolism; glycerophospholipid metabolism. Functionally, catalyzes the reduction of the glycolytic intermediate dihydroxyacetone phosphate (DHAP) to sn-glycerol 3-phosphate (G3P), the key precursor for phospholipid synthesis. The protein is Glycerol-3-phosphate dehydrogenase [NAD(P)+] of Salmonella agona (strain SL483).